The chain runs to 484 residues: ATP synthase subunit beta (484 aa).

An ATP-binding site is contributed by 162–169 (GGAGVGKT).

Belongs to the ATPase alpha/beta chains family. In terms of assembly, F-type ATPases have 2 components, CF(1) - the catalytic core - and CF(0) - the membrane proton channel. CF(1) has five subunits: alpha(3), beta(3), gamma(1), delta(1), epsilon(1). CF(0) has four main subunits: a(1), b(1), b'(1) and c(9-12).

The protein resides in the cellular thylakoid membrane. It carries out the reaction ATP + H2O + 4 H(+)(in) = ADP + phosphate + 5 H(+)(out). Functionally, produces ATP from ADP in the presence of a proton gradient across the membrane. The catalytic sites are hosted primarily by the beta subunits. This Trichodesmium erythraeum (strain IMS101) protein is ATP synthase subunit beta.